The following is an 85-amino-acid chain: MAHKKGVGSSRNGRDSNPKYLGVKLFGGQAIEAGNIIIRQRGTQFHAGDGVGLGRDHTLFALVDGTVAFSIKGPKKRRTVNVIPA.

Belongs to the bacterial ribosomal protein bL27 family.

This is Large ribosomal subunit protein bL27 from Xylella fastidiosa (strain 9a5c).